The primary structure comprises 132 residues: Replication enhancer protein (132 aa).

Belongs to the geminiviridae replication enhancer protein family. Homooligomer. Interacts with the replication-associated protein (REP). Interacts with host proliferating cell nuclear antigen (PCNA). Interacts with host retinoblastoma-related protein 1 (RBR1), and may thereby deregulate the host cell cycle. Oligomerization and interaction with PCNA are necessary for optimal replication enhancement.

Its function is as follows. Increases viral DNA accumulation. Enhances infectivity and symptom expression. This chain is Replication enhancer protein, found in Abutilon (Upland cotton).